The following is a 510-amino-acid chain: MAVFISSSGSPGRATATTTTTTTLLLAVLAAAAAAGLLLAPVAARGSPPEHDKQLQLQQQEDDRIPGLPGQPNGVAFGMYGGYVTIDDNNGRALYYWFQEADTADPAAAPLVLWLNGGPGCSSIGLGAMQELGPFRVHTNGESLLLNEYAWNKAANILFAESPAGVVFSYSNTSSDLSMGDDKMAQDTYTFLVKWFERFPHYNYREFYIAGESGHFIPQLSQVVYRNRNNSPFINFQGLLVSSGLTNDHEDMIGMFELWWHHGLISDETRDSGLKVCPGTSFMHPTPECTEVWNKALAEQGNINPYTIYTPTCDREPSPYQRRFWAPHGRAAPPPLMLPPYDPCAVFNSINYLNLPEVQTALHANVSGIVEYPWTVCSNTIFDQWGQAADDLLPVYRELIQAGLRVWVYSGDTDSVVPVSSTRRSLAALELPVKTSWYPWYMAPTEREVGGWSVQYEGLTYVSPSGAGHLVPVHRPAQAFLLFKQFLKGEPMPAEEKNDILLPSEKAPFY.

Residues 1–34 (MAVFISSSGSPGRATATTTTTTTLLLAVLAAAAA) form the signal peptide. Position 116 to 118 (116 to 118 (NGG)) interacts with substrate. Cystine bridges form between Cys-121–Cys-377, Cys-277–Cys-289, and Cys-313–Cys-344. N-linked (GlcNAc...) asparagine glycosylation occurs at Asn-172. 212–213 (ES) is a binding site for substrate. Residue Ser-213 is part of the active site. N-linked (GlcNAc...) asparagine glycosylation occurs at Asn-365. Active-site residues include Asp-414 and His-469. 465–469 (SGAGH) serves as a coordination point for substrate.

This sequence belongs to the peptidase S10 family. Heterotetramer of two A and two B chains. The A and B chains are linked by a disulfide bond. In terms of processing, the N-terminus of chain A is blocked. Primary leaves of seedlings.

It catalyses the reaction (S)-4-hydroxymandelonitrile = 4-hydroxybenzaldehyde + hydrogen cyanide. In terms of biological role, involved in cyanogenesis, the release of HCN from injured tissues. Is involved in the catabolism of the cyanogenic glycoside dhurrin. This Sorghum bicolor (Sorghum) protein is P-(S)-hydroxymandelonitrile lyase.